A 68-amino-acid chain; its full sequence is ATP synthase protein 8 (68 aa).

The helical transmembrane segment at 8–24 threads the bilayer; sequence TWLTIITPTLLALFLIT. Position 54 is an N6-acetyllysine; alternate (lysine 54). Lysine 54 carries the post-translational modification N6-succinyllysine; alternate. Lysine 57 bears the N6-acetyllysine mark.

It belongs to the ATPase protein 8 family. F-type ATPases have 2 components, CF(1) - the catalytic core - and CF(0) - the membrane proton channel. Component of an ATP synthase complex composed of ATP5PB, ATP5MC1, ATP5F1E, ATP5PD, ATP5ME, ATP5PF, ATP5MF, MT-ATP6, MT-ATP8, ATP5F1A, ATP5F1B, ATP5F1D, ATP5F1C, ATP5PO, ATP5MG, ATP5MK and ATP5MJ. Interacts with PRICKLE3.

It is found in the mitochondrion membrane. In terms of biological role, mitochondrial membrane ATP synthase (F(1)F(0) ATP synthase or Complex V) produces ATP from ADP in the presence of a proton gradient across the membrane which is generated by electron transport complexes of the respiratory chain. F-type ATPases consist of two structural domains, F(1) - containing the extramembraneous catalytic core and F(0) - containing the membrane proton channel, linked together by a central stalk and a peripheral stalk. During catalysis, ATP synthesis in the catalytic domain of F(1) is coupled via a rotary mechanism of the central stalk subunits to proton translocation. Part of the complex F(0) domain. Minor subunit located with subunit a in the membrane. This is ATP synthase protein 8 (MT-ATP8) from Pongo pygmaeus (Bornean orangutan).